Here is an 85-residue protein sequence, read N- to C-terminus: Large ribosomal subunit protein bL27 (85 aa).

The protein belongs to the bacterial ribosomal protein bL27 family.

The polypeptide is Large ribosomal subunit protein bL27 (Campylobacter fetus subsp. fetus (strain 82-40)).